The sequence spans 2259 residues: Golgin subfamily A member 4 (2259 aa).

Residues 1 to 54 (MFKKLKQKISEEQQQLQQALAPAQASSSSSTPTRTRSRTSSFTDQLDDATPNRE) form a disordered region. Ser-10 carries the phosphoserine modification. Over residues 12 to 41 (EQQQLQQALAPAQASSSSSTPTRTRSRTSS) the composition is skewed to low complexity. At Thr-39 the chain carries Phosphothreonine. A phosphoserine mark is found at Ser-41, Ser-104, and Ser-111. The interaction with MACF1 stretch occupies residues 165-235 (SLSREQLLQR…EELQMDQQAK (71 aa)). Residues 167–2182 (SREQLLQRLR…SYEKSVCAAA (2016 aa)) adopt a coiled-coil conformation. Composition is skewed to basic and acidic residues over residues 1932-1946 (LEDR…HVIE) and 1954-1977 (DGRH…LSKE). The segment at 1932 to 1977 (LEDRPEENSKSHVIESKLGTPMDGRHSDLESKLAGSEREKQKLSKE) is disordered. The GRIP domain maps to 2199–2246 (LFGEPTEFEYLRKVLFEYMMGRETKTMAKVITTVLRFPDDQAQKILER).

As to quaternary structure, homodimer. Interacts with GTP-bound ARL1 and ARL3. Interacts with MACF1. Directly interacts with TBC1D23. Interacts with FAM91A1; this interaction may be mediated by TBC1D23. Expressed in the head of epididymal sperm but not in testicular sperm (at protein level).

It is found in the cytoplasm. The protein resides in the golgi apparatus membrane. Its subcellular location is the golgi apparatus. It localises to the trans-Golgi network membrane. In terms of biological role, involved in vesicular trafficking at the Golgi apparatus level. May play a role in delivery of transport vesicles containing GPI-linked proteins from the trans-Golgi network through its interaction with MACF1. Involved in endosome-to-Golgi trafficking. The chain is Golgin subfamily A member 4 from Rattus norvegicus (Rat).